Reading from the N-terminus, the 514-residue chain is 2,3-bisphosphoglycerate-independent phosphoglycerate mutase (514 aa).

Residues aspartate 14 and serine 64 each contribute to the Mn(2+) site. Serine 64 serves as the catalytic Phosphoserine intermediate. Substrate-binding positions include histidine 125, 155 to 156 (RD), arginine 187, arginine 193, 263 to 266 (RADR), and lysine 336. Positions 403, 407, 444, 445, and 463 each coordinate Mn(2+).

It belongs to the BPG-independent phosphoglycerate mutase family. Monomer. The cofactor is Mn(2+).

The enzyme catalyses (2R)-2-phosphoglycerate = (2R)-3-phosphoglycerate. The protein operates within carbohydrate degradation; glycolysis; pyruvate from D-glyceraldehyde 3-phosphate: step 3/5. Catalyzes the interconversion of 2-phosphoglycerate and 3-phosphoglycerate. This chain is 2,3-bisphosphoglycerate-independent phosphoglycerate mutase, found in Escherichia coli O6:H1 (strain CFT073 / ATCC 700928 / UPEC).